A 739-amino-acid polypeptide reads, in one-letter code: AN1-type zinc finger protein 4 (739 aa).

Residues 54 to 129 form the Ubiquitin-like domain; sequence MELFIETLTG…LKLVLAMRGG (76 aa). A compositionally biased stretch (basic residues) spans 246–255; the sequence is KPKKVVKVKP. Disordered regions lie at residues 246 to 270 and 287 to 316; these read KPKKVVKVKPRPPLAPRPTSSSTAA and LPSGNAHLPETSRNAGPSPAAQAPADRPVS. The AN1-type zinc-finger motif lies at 673 to 720; that stretch reads KKIMKHCFLCGKKTGLATSFECRCGNNFCASHRYAEAHGCTYDYKSAG. Positions 679, 682, 694, 696, 701, 704, 710, and 712 each coordinate Zn(2+).

The polypeptide is AN1-type zinc finger protein 4 (Zfand4) (Mus musculus (Mouse)).